Reading from the N-terminus, the 61-residue chain is Japonicin-1CDYa (61 aa).

Residues 1–22 form the signal peptide; the sequence is MFTLKKSLLLLFFLGVINVSLC. Positions 23–45 are excised as a propeptide; sequence EEERDADEEERRDDPEERDVEVE. A disulfide bond links Cys55 and Cys61.

It belongs to the frog skin active peptide (FSAP) family. Brevinin subfamily. Expressed by the skin glands.

It localises to the secreted. Its function is as follows. Antimicrobial peptide. Has low activity against the Gram-positive bacterium S.aureus (MIC&gt;100 uM) and the Gram-negative bacterium E.coli (MIC=25 uM). Lacks hemolytic activity against human erythrocytes. This Rana dybowskii (Dybovsky's frog) protein is Japonicin-1CDYa.